The following is a 72-amino-acid chain: Mitochondrial import protein 2 (72 aa).

A disordered region spans residues M1–S22. At M1–Q34 the chain is on the cytoplasmic side. The chain crosses the membrane as a helical span at residues L35–G52. Residues R53 to N72 are Mitochondrial intermembrane-facing.

The protein belongs to the MIM2 family. Component of the mitochondrial outer import machinery (MIM) complex containing at least mim1 and mim2. Interacts with mim1. Interacts with mitophagy receptor atg43.

Its subcellular location is the mitochondrion outer membrane. Component of the mitochondrial outer import machinery (MIM) complex that mediates transport of proteins into mitochondrial compartments. Promotes the insertion of tom70 into the outer mitochondrial membrane. Promotes the insertion of atg43 into the outer mitochondrial membrane. Involved in import of the subset of proteins with multiple alpha-helical transmembrane segments. The sequence is that of Mitochondrial import protein 2 from Schizosaccharomyces pombe (strain 972 / ATCC 24843) (Fission yeast).